The primary structure comprises 428 residues: Adenylosuccinate synthetase (428 aa).

GTP is bound by residues 12–18 (GDEGKGK) and 40–42 (GHT). Aspartate 13 (proton acceptor) is an active-site residue. Residues aspartate 13 and glycine 40 each coordinate Mg(2+). Residues 13-16 (DEGK), 38-41 (NAGH), threonine 129, arginine 143, glutamine 224, threonine 239, and arginine 303 contribute to the IMP site. The Proton donor role is filled by histidine 41. 299-305 (VTTGRIR) is a binding site for substrate. GTP contacts are provided by residues arginine 305, 331–333 (KVD), and 410–412 (AYG).

This sequence belongs to the adenylosuccinate synthetase family. Homodimer. Requires Mg(2+) as cofactor.

The protein resides in the cytoplasm. It carries out the reaction IMP + L-aspartate + GTP = N(6)-(1,2-dicarboxyethyl)-AMP + GDP + phosphate + 2 H(+). It participates in purine metabolism; AMP biosynthesis via de novo pathway; AMP from IMP: step 1/2. In terms of biological role, plays an important role in the de novo pathway of purine nucleotide biosynthesis. Catalyzes the first committed step in the biosynthesis of AMP from IMP. The sequence is that of Adenylosuccinate synthetase from Francisella tularensis subsp. holarctica (strain FTNF002-00 / FTA).